The following is a 261-amino-acid chain: Thiazole synthase (261 aa).

The active-site Schiff-base intermediate with DXP is Lys102. 1-deoxy-D-xylulose 5-phosphate-binding positions include Gly163, 189 to 190, and 211 to 212; these read AG and NT.

Belongs to the ThiG family. In terms of assembly, homotetramer. Forms heterodimers with either ThiH or ThiS.

Its subcellular location is the cytoplasm. It catalyses the reaction [ThiS sulfur-carrier protein]-C-terminal-Gly-aminoethanethioate + 2-iminoacetate + 1-deoxy-D-xylulose 5-phosphate = [ThiS sulfur-carrier protein]-C-terminal Gly-Gly + 2-[(2R,5Z)-2-carboxy-4-methylthiazol-5(2H)-ylidene]ethyl phosphate + 2 H2O + H(+). The protein operates within cofactor biosynthesis; thiamine diphosphate biosynthesis. Catalyzes the rearrangement of 1-deoxy-D-xylulose 5-phosphate (DXP) to produce the thiazole phosphate moiety of thiamine. Sulfur is provided by the thiocarboxylate moiety of the carrier protein ThiS. In vitro, sulfur can be provided by H(2)S. In Acinetobacter baumannii (strain AB307-0294), this protein is Thiazole synthase.